We begin with the raw amino-acid sequence, 180 residues long: ATP synthase subunit b (180 aa).

A helical transmembrane segment spans residues 26–48 (SMILFWKAVNTVILLGLVYYFGG).

It belongs to the ATPase B chain family. In terms of assembly, F-type ATPases have 2 components, F(1) - the catalytic core - and F(0) - the membrane proton channel. F(1) has five subunits: alpha(3), beta(3), gamma(1), delta(1), epsilon(1). F(0) has three main subunits: a(1), b(2) and c(10-14). The alpha and beta chains form an alternating ring which encloses part of the gamma chain. F(1) is attached to F(0) by a central stalk formed by the gamma and epsilon chains, while a peripheral stalk is formed by the delta and b chains.

The protein resides in the cell inner membrane. In terms of biological role, f(1)F(0) ATP synthase produces ATP from ADP in the presence of a proton or sodium gradient. F-type ATPases consist of two structural domains, F(1) containing the extramembraneous catalytic core and F(0) containing the membrane proton channel, linked together by a central stalk and a peripheral stalk. During catalysis, ATP synthesis in the catalytic domain of F(1) is coupled via a rotary mechanism of the central stalk subunits to proton translocation. Functionally, component of the F(0) channel, it forms part of the peripheral stalk, linking F(1) to F(0). The protein is ATP synthase subunit b of Sulfurihydrogenibium sp. (strain YO3AOP1).